The primary structure comprises 228 residues: Early nodulin-like protein 18 (228 aa).

The signal sequence occupies residues 1 to 26 (MSPSCSSCVNVLLIMCLMLLSLSADA). The Phytocyanin domain maps to 28-148 (KNYTVGESTG…GQHFMINVTH (121 aa)). 4 N-linked (GlcNAc...) asparagine glycosylation sites follow: asparagine 29, asparagine 71, asparagine 94, and asparagine 145. A disulfide bond links cysteine 86 and cysteine 136. Residues 148–211 (HGQGLPDSSS…VHSKKSSSST (64 aa)) form a disordered region. Positions 153–170 (PDSSSPDDAAAPGPSESS) are enriched in low complexity. The span at 188–204 (DHPKDIESADDDKEVHS) shows a compositional bias: basic and acidic residues. Residue serine 204 is the site of GPI-anchor amidated serine attachment. The propeptide at 205-228 (KKSSSSTTKTSLFCFVFMGLFASF) is removed in mature form.

The protein belongs to the early nodulin-like (ENODL) family. In terms of tissue distribution, mostly expressed in seedlings, roots and flowers, and, to a lower extent, in leaves, stems and seeds.

The protein resides in the cell membrane. In terms of biological role, may act as a carbohydrate transporter. This chain is Early nodulin-like protein 18, found in Arabidopsis thaliana (Mouse-ear cress).